We begin with the raw amino-acid sequence, 542 residues long: Ribonuclease Y (542 aa).

A helical membrane pass occupies residues 1 to 21 (MLIALIAVSVLAVAAIIGSLA). A disordered region spans residues 52 to 92 (SRASQDLADSRKDVAKARAELESSRTRASDEARRADNADQA). Positions 59–92 (ADSRKDVAKARAELESSRTRASDEARRADNADQA) are enriched in basic and acidic residues. A KH domain is found at 229–289 (VVSVVPLPSN…MRREVARQAL (61 aa)). One can recognise an HD domain in the interval 355 to 449 (VLDHCVECAR…VKAADAISAA (95 aa)).

Belongs to the RNase Y family.

It localises to the cell membrane. In terms of biological role, endoribonuclease that initiates mRNA decay. The sequence is that of Ribonuclease Y from Cutibacterium acnes (strain DSM 16379 / KPA171202) (Propionibacterium acnes).